The primary structure comprises 87 residues: HssA/B-like protein 58 (87 aa).

Polar residues predominate over residues 1–13; it reads MTILSAITSISRP. The disordered stretch occupies residues 1–31; sequence MTILSAITSISRPNKSSKSVISSNGGSSLSM. The segment covering 14–31 has biased composition (low complexity); the sequence is NKSSKSVISSNGGSSLSM.

Belongs to the hssA/B family.

The polypeptide is HssA/B-like protein 58 (hssl58) (Dictyostelium discoideum (Social amoeba)).